The following is a 244-amino-acid chain: Lymphotoxin-beta (244 aa).

Over 1–18 the chain is Cytoplasmic; the sequence is MGALGLEGRGGRLQGRGS. The chain crosses the membrane as a helical; Signal-anchor for type II membrane protein span at residues 19–48; that stretch reads LLLAVAGATSLVTLLLAVPITVLAVLALVP. At 49-244 the chain is on the extracellular side; that stretch reads QDQGGLVTET…KTFFGAVMVG (196 aa). In terms of domain architecture, THD spans 88-243; sequence PAAHLIGAPL…GKTFFGAVMV (156 aa). Asn222 carries an N-linked (GlcNAc...) asparagine glycan.

The protein belongs to the tumor necrosis factor family. Heterotrimer of either two LTB and one LTA subunits or (less prevalent) one LTB and two LTA subunits. As to expression, spleen and thymus.

Its subcellular location is the membrane. Its function is as follows. Cytokine that binds to LTBR/TNFRSF3. May play a specific role in immune response regulation. Provides the membrane anchor for the attachment of the heterotrimeric complex to the cell surface. Isoform 2 is probably non-functional. This Homo sapiens (Human) protein is Lymphotoxin-beta (LTB).